The following is a 102-amino-acid chain: RxLR effector protein PexRD41 (102 aa).

The N-terminal stretch at 1-21 is a signal peptide; it reads MRSIFYFALAFAALTCSNASA. The RxLR-dEER motif lies at 39-53; it reads RSLRVAGQEAARGEE.

The protein belongs to the RxLR effector family. As to quaternary structure, interacts with host KRBP1.

It is found in the secreted. It localises to the host cytoplasm. The protein resides in the host nucleus. The protein localises to the host nucleolus. Its function is as follows. Effector that enhances P.infestans colonization of host plant leaves. During the early stages of P.infestans infection, interacts with and stabilizes host potato K-homology (KH) RNA-binding protein KRBP1, leading to its accumulation. The protein is RxLR effector protein PexRD41 of Phytophthora infestans (strain T30-4) (Potato late blight agent).